A 365-amino-acid chain; its full sequence is Eukaryotic translation initiation factor 3 subunit H (365 aa).

The MPN domain maps to Val11–Phe160.

This sequence belongs to the eIF-3 subunit H family. As to quaternary structure, component of the eukaryotic translation initiation factor 3 (eIF-3) complex.

It localises to the cytoplasm. Functionally, component of the eukaryotic translation initiation factor 3 (eIF-3) complex, which is involved in protein synthesis of a specialized repertoire of mRNAs and, together with other initiation factors, stimulates binding of mRNA and methionyl-tRNAi to the 40S ribosome. The eIF-3 complex specifically targets and initiates translation of a subset of mRNAs involved in cell proliferation. This Aspergillus oryzae (strain ATCC 42149 / RIB 40) (Yellow koji mold) protein is Eukaryotic translation initiation factor 3 subunit H.